Consider the following 515-residue polypeptide: 3-[(3aS,4S,7aS)-7a-methyl-1,5-dioxo-octahydro-1H-inden-4-yl]propanoyl:CoA ligase (515 aa).

ATP contacts are provided by residues 185 to 193 (TSGTTGRSK), D398, R413, and K504.

This sequence belongs to the ATP-dependent AMP-binding enzyme family.

It catalyses the reaction 3-[(3aS,4S,7aS)-7a-methyl-1,5-dioxo-octahydro-1H-inden-4-yl]propanoate + ATP + CoA = 3-[(3aS,4S,7aS)-7a-methyl-1,5-dioxo-octahydro-1H-inden-4-yl]propanoyl-CoA + AMP + diphosphate. Involved in the catabolism of the rings C and D of cholesterol. Catalyzes the ATP-dependent CoA thioesterification of 3aalpha-H-4alpha(3'-propanoate)-7abeta-methylhexahydro-1,5-indanedione (HIP). In Rhodococcus jostii (strain RHA1), this protein is 3-[(3aS,4S,7aS)-7a-methyl-1,5-dioxo-octahydro-1H-inden-4-yl]propanoyl:CoA ligase.